Here is a 336-residue protein sequence, read N- to C-terminus: Glycerol-3-phosphate dehydrogenase [NAD(P)+] (336 aa).

Ser-13, Trp-14, Arg-34, and Lys-108 together coordinate NADPH. Sn-glycerol 3-phosphate contacts are provided by Lys-108, Gly-138, and Ser-140. Ala-142 contributes to the NADPH binding site. The sn-glycerol 3-phosphate site is built by Lys-193, Asp-246, Ser-256, Arg-257, and Asn-258. Residue Lys-193 is the Proton acceptor of the active site. Arg-257 is a binding site for NADPH. The NADPH site is built by Val-281 and Glu-283.

The protein belongs to the NAD-dependent glycerol-3-phosphate dehydrogenase family.

It localises to the cytoplasm. The enzyme catalyses sn-glycerol 3-phosphate + NAD(+) = dihydroxyacetone phosphate + NADH + H(+). It carries out the reaction sn-glycerol 3-phosphate + NADP(+) = dihydroxyacetone phosphate + NADPH + H(+). Its pathway is membrane lipid metabolism; glycerophospholipid metabolism. In terms of biological role, catalyzes the reduction of the glycolytic intermediate dihydroxyacetone phosphate (DHAP) to sn-glycerol 3-phosphate (G3P), the key precursor for phospholipid synthesis. The sequence is that of Glycerol-3-phosphate dehydrogenase [NAD(P)+] from Carboxydothermus hydrogenoformans (strain ATCC BAA-161 / DSM 6008 / Z-2901).